The sequence spans 145 residues: Hemoglobin subunit beta-A (145 aa).

In terms of domain architecture, Globin spans 1–145; sequence MLTAEEKAAV…VANALAHRYH (145 aa). Residues His-62 and His-91 each coordinate heme b.

This sequence belongs to the globin family. Heterotetramer of two alpha chains and two beta chains. Red blood cells.

In terms of biological role, involved in oxygen transport from the lung to the various peripheral tissues. In Capra hircus (Goat), this protein is Hemoglobin subunit beta-A.